Reading from the N-terminus, the 189-residue chain is MTEYKLVVVGAKGVGKSALTIQLIQNHFVDEYDPTIEDSYRKQVVIDGETCLLDILDTAGQEEYSAMRDQYMRTGEGFLCVFAINNTKSFEDIHQYREQIKRVKDSDDVPMVLVGNKCDLAARTVESRQAQDLARSYGIPYIKTSAKTRQGVEDAFYTLVREIRQHKLRKLNPPDESGPGCMSCKCVLS.

10–17 (GAKGVGKS) provides a ligand contact to GTP. The short motif at 32–40 (YDPTIEDSY) is the Effector region element. GTP-binding positions include 57 to 61 (DTAGQ) and 116 to 119 (NKCD). Residues Cys181 and Cys184 are each lipidated (S-palmitoyl cysteine; by host). Cys186 carries the cysteine methyl ester; by host modification. Cys186 is lipidated: S-farnesyl cysteine; by host. The propeptide at 187–189 (VLS) is removed in mature form.

It belongs to the small GTPase superfamily. Ras family.

It is found in the host cell membrane. The catalysed reaction is GTP + H2O = GDP + phosphate + H(+). Alternates between an inactive form bound to GDP and an active form bound to GTP. Activated by a guanine nucleotide-exchange factor (GEF) and inactivated by a GTPase-activating protein (GAP). The polypeptide is GTPase HRas (H-RAS) (Moloney murine sarcoma virus (MoMSV)).